Here is a 748-residue protein sequence, read N- to C-terminus: CCR4-NOT transcription complex subunit 10-B (748 aa).

Residues 1 to 16 (MAADKAGEQGAEKHEG) show a composition bias toward basic and acidic residues. Disordered stretches follow at residues 1–25 (MAADKAGEQGAEKHEGSANCSGISD), 483–524 (KQEN…PPSS), and 605–634 (VSLGVSSNEQEQGSDKGENEPMESAGKQIP). Composition is skewed to polar residues over residues 487-509 (GSKASSQTVNTDSSGESSDVCSN) and 605-615 (VSLGVSSNEQE).

It belongs to the CNOT10 family. As to quaternary structure, component of the CCR4-NOT complex. cnot10 and cnot11 form a subcomplex docked to the cnot1 scaffold.

Its subcellular location is the cytoplasm. The protein resides in the nucleus. Its function is as follows. Component of the CCR4-NOT complex which is one of the major cellular mRNA deadenylases and is linked to various cellular processes including bulk mRNA degradation, miRNA-mediated repression, translational repression during translational initiation and general transcription regulation. Additional complex functions may be a consequence of its influence on mRNA expression. Is not required for association of CNOT7 to the CCR4-NOT complex. The protein is CCR4-NOT transcription complex subunit 10-B (cnot10-b) of Xenopus laevis (African clawed frog).